Here is a 370-residue protein sequence, read N- to C-terminus: Small ribosomal subunit biogenesis GTPase RsgA 1 (370 aa).

The 159-residue stretch at 97–255 (QTQLDRPPIA…LADTPGFNQP (159 aa)) folds into the CP-type G domain. GTP is bound by residues 146–149 (NKSD) and 197–205 (GPSGVGKSS). Zn(2+) is bound by residues C280, C285, H287, and C293. The tract at residues 325–370 (PESTLKLKTKGKGQSQYEPKLESKKYRRTSRRTQVQGLQDLYQEEE) is disordered.

The protein belongs to the TRAFAC class YlqF/YawG GTPase family. RsgA subfamily. Monomer. Associates with 30S ribosomal subunit, binds 16S rRNA. Zn(2+) is required as a cofactor.

The protein resides in the cytoplasm. One of several proteins that assist in the late maturation steps of the functional core of the 30S ribosomal subunit. Helps release RbfA from mature subunits. May play a role in the assembly of ribosomal proteins into the subunit. Circularly permuted GTPase that catalyzes slow GTP hydrolysis, GTPase activity is stimulated by the 30S ribosomal subunit. This Nostoc sp. (strain PCC 7120 / SAG 25.82 / UTEX 2576) protein is Small ribosomal subunit biogenesis GTPase RsgA 1.